Consider the following 585-residue polypeptide: Probable G-protein coupled receptor Mth-like 10 (585 aa).

The first 32 residues, 1–32 (MPKKIHQPGGSLYCGVTLLGVLCLVVFRLIPG), serve as a signal peptide directing secretion. The Extracellular portion of the chain corresponds to 33–250 (IPFGTYVMAE…DHSTVKIINS (218 aa)). 5 disulfide bridges follow: cysteine 56/cysteine 110, cysteine 112/cysteine 117, cysteine 121/cysteine 216, cysteine 122/cysteine 135, and cysteine 177/cysteine 236. Residues asparagine 63 and asparagine 72 are each glycosylated (N-linked (GlcNAc...) asparagine). N-linked (GlcNAc...) asparagine glycosylation is found at asparagine 142, asparagine 152, asparagine 157, asparagine 198, and asparagine 223. Residues 251–271 (YAMMFSIPFMMLTIAVYLLIP) traverse the membrane as a helical segment. At 272–280 (ELRNQHGKS) the chain is on the cytoplasmic side. Residues 281 to 301 (LVCYLIGLSVGYSSLCYVQLY) form a helical membrane-spanning segment. At 302–312 (QVDATGVTCKV) the chain is on the extracellular side. A helical transmembrane segment spans residues 313-333 (FGYTAYFFFMGAYMWLSVISF). Residues 334–353 (DLWHNFRGTRGINRFQEKKR) are Cytoplasmic-facing. A helical membrane pass occupies residues 354-374 (FLFYSLYSWGIALVFLAFTYC). The Extracellular segment spans residues 375–404 (AQQLTNLPANLKPGIGDGVYCWLDMSNWAA). Residues 405–425 (MIYFYGPILAIVVANTIMFIM) form a helical membrane-spanning segment. The Cytoplasmic segment spans residues 426–466 (TAIKIHGVQREMARIIASENSTKNLRTEKDKRFYRAWSNYR). Residues 467–487 (FGLFLRLFLIMGITWLTELIS) traverse the membrane as a helical segment. Residues 488–498 (YFVGSDKGWSK) lie on the Extracellular side of the membrane. A helical transmembrane segment spans residues 499–519 (LFYISDLANAMQGFLIFMLFV). The Cytoplasmic portion of the chain corresponds to 520-585 (MKKKVKHLIT…VDPQKTTIFR (66 aa)).

Belongs to the G-protein coupled receptor 2 family. Mth subfamily.

It is found in the cell membrane. This is Probable G-protein coupled receptor Mth-like 10 (mthl10) from Drosophila melanogaster (Fruit fly).